Here is a 277-residue protein sequence, read N- to C-terminus: Bifunctional protein FolD (277 aa).

NADP(+) contacts are provided by residues 164 to 166 (GRS), S189, and T230.

This sequence belongs to the tetrahydrofolate dehydrogenase/cyclohydrolase family. In terms of assembly, homodimer.

The catalysed reaction is (6R)-5,10-methylene-5,6,7,8-tetrahydrofolate + NADP(+) = (6R)-5,10-methenyltetrahydrofolate + NADPH. It catalyses the reaction (6R)-5,10-methenyltetrahydrofolate + H2O = (6R)-10-formyltetrahydrofolate + H(+). It functions in the pathway one-carbon metabolism; tetrahydrofolate interconversion. In terms of biological role, catalyzes the oxidation of 5,10-methylenetetrahydrofolate to 5,10-methenyltetrahydrofolate and then the hydrolysis of 5,10-methenyltetrahydrofolate to 10-formyltetrahydrofolate. The chain is Bifunctional protein FolD from Clostridium perfringens (strain 13 / Type A).